Reading from the N-terminus, the 225-residue chain is Protein-L-isoaspartate O-methyltransferase (225 aa).

Residues 57-60 (ATVS), His65, Ser89, 110-111 (EH), 142-143 (DG), Thr216, and Gln221 each bind S-adenosyl-L-homocysteine. The active site involves Ser60.

Belongs to the methyltransferase superfamily. L-isoaspartyl/D-aspartyl protein methyltransferase family. Monomer.

Its subcellular location is the cytoplasm. The protein resides in the cytosol. It catalyses the reaction [protein]-L-isoaspartate + S-adenosyl-L-methionine = [protein]-L-isoaspartate alpha-methyl ester + S-adenosyl-L-homocysteine. Its function is as follows. Initiates the repair of damaged proteins by catalyzing methyl esterification of L-isoaspartyl and D-aspartyl residues produced by spontaneous isomerization and racemization of L-aspartyl and L-asparaginyl residues in aging peptides and proteins. The chain is Protein-L-isoaspartate O-methyltransferase (pcm-1) from Caenorhabditis elegans.